Consider the following 503-residue polypeptide: uncharacterized protein (503 aa).

Disordered stretches follow at residues 1–26 (MADD…SPTT) and 132–156 (DQQQ…DNSM). The segment covering 16–26 (AQSSVPTSPTT) has biased composition (low complexity). The span at 147 to 156 (TPNSVDDNSM) shows a compositional bias: polar residues.

This is an uncharacterized protein from Caenorhabditis elegans.